The following is a 336-amino-acid chain: F-box protein PP2-B1 (336 aa).

The interval 1–22 (MEQIHGGDSNSGGGGGGSSRND) is disordered. Residues 9–18 (SNSGGGGGGS) show a composition bias toward gly residues. In terms of domain architecture, F-box spans 29-75 (ASRFDALPEDCISKVISHTSPRDACVVASVSKSVKSAAQSDLVWEMF).

In terms of assembly, part of a SCF (ASK-cullin-F-box) protein ligase complex. Interacts with SKP1A/ASK1 and SPK1B/ASK2.

It localises to the nucleus. It participates in protein modification; protein ubiquitination. In terms of biological role, component of SCF(ASK-cullin-F-box) E3 ubiquitin ligase complexes, which may mediate the ubiquitination and subsequent proteasomal degradation of target proteins. In Arabidopsis thaliana (Mouse-ear cress), this protein is F-box protein PP2-B1 (PP2B1).